Consider the following 144-residue polypeptide: Maximins 3/H14 (144 aa).

An N-terminal signal peptide occupies residues 1–18 (MNFKYIVAVSFLIASAYA). 2 propeptides span residues 19-43 (RSVQ…REIR) and 73-122 (RTAE…KKEK). At isoleucine 143 the chain carries Isoleucine amide.

It belongs to the bombinin family. Expressed by the skin glands.

The protein localises to the secreted. Maximin-3 shows antibacterial activity against both Gram-positive and Gram-negative bacteria. It also shows antimicrobial activity against the fungus C.albicans, but not against A.flavus nor P.uticale. It has little hemolytic activity. It possess a significant cytotoxicity against tumor cell lines. It possess a significant anti-HIV activity. It shows high spermicidal activity. Functionally, maximin-H14 shows antimicrobial activity against bacteria and against the fungus C.albicans. Shows strong hemolytic activity. This Bombina maxima (Giant fire-bellied toad) protein is Maximins 3/H14.